The chain runs to 424 residues: Spore coat protein SP60 (424 aa).

An N-terminal signal peptide occupies residues 1–23 (MKILSLLVVGALCMGGKVYGEVN). Follistatin-like domains follow at residues 52-74 (DCSTLQCPPRYHCEVNNGNRQCV), 85-109 (KCDNVHCPKGFNCKYDWEKDLALCV), 117-139 (VCRTRCPEGHECKVDEWGKECCV), 184-206 (ICRLRCPPGHECKHDEHGKECCV), 215-234 (DLKCKRGYECKIKHDGSKCC), and 299-322 (RCDDVECPDFHRCVERRGGILSCE). A disordered region spans residues 330–424 (RSLDWAENEN…FQDANDEWDY (95 aa)). Acidic residues-rich tracts occupy residues 335–357 (AENENDDRDYDDRDYDDDEYDGD) and 365–424 (YDGD…EWDY).

The protein is Spore coat protein SP60 (cotC) of Dictyostelium discoideum (Social amoeba).